A 515-amino-acid polypeptide reads, in one-letter code: Zinc metalloproteinase-disintegrin-like EoMP06 (515 aa).

The propeptide occupies 1–94; sequence VEDHCYYHGR…TLGLIVPPHG (94 aa). At Q95 the chain carries Pyrrolidone carboxylic acid. The Peptidase M12B domain maps to 100-296; sequence KFIELIIVVD…YNPKCIVDPP (197 aa). E103 lines the Ca(2+) pocket. N-linked (GlcNAc...) asparagine glycosylation is present at N160. Residue D187 participates in Ca(2+) binding. 2 N-linked (GlcNAc...) asparagine glycosylation sites follow: N194 and N225. Disulfide bonds link C211-C291, C251-C275, and C253-C258. Residue H236 coordinates Zn(2+). Residue E237 is part of the active site. The Zn(2+) site is built by H240 and H246. The Ca(2+) site is built by C291, V306, N309, V311, E313, E316, and D319. In terms of domain architecture, Disintegrin spans 304–390; the sequence is PAVCGNGVWE…ECPRNEFQRN (87 aa). Disulfide bonds link C307/C336, C318/C331, C320/C326, C330/C353, C344/C350, C349/C375, C362/C382, C369/C401, C394/C406, C413/C466, C428/C477, C441/C454, C461/C503, and C497/C508. A D/ECD-tripeptide motif is present at residues 368–370; the sequence is DCD. Ca(2+) is bound by residues D370, V371, and N385.

It belongs to the venom metalloproteinase (M12B) family. P-III subfamily. P-IIIa sub-subfamily. As to quaternary structure, monomer. It depends on Zn(2+) as a cofactor. As to expression, expressed by the venom gland.

The protein localises to the secreted. Snake venom zinc metalloproteinase that catalyzes the conversion of prothrombin (F2) to alpha-thrombin through formation of a thrombin intermediate, thereby functioning as a procoagulant protein. This is Zinc metalloproteinase-disintegrin-like EoMP06 from Echis ocellatus (Ocellated saw-scaled viper).